The sequence spans 694 residues: DNA-binding protein RFX2 (694 aa).

Residues 174–249 (HLQWLLDNYE…YHYYGIRLKP (76 aa)) constitute a DNA-binding region (RFX-type winged-helix). 2 disordered regions span residues 267–310 (QQPI…QHHQ) and 658–694 (KDDV…MQEM). The span at 289 to 299 (PANSSQHASPE) shows a compositional bias: polar residues. The span at 300 to 310 (QSVAAQSQHHQ) shows a compositional bias: low complexity.

It belongs to the RFX family. As to quaternary structure, homodimer. Heterodimer; heterodimerizes with other rfx proteins. Preferentially expressed in ciliated tissues, such as neural tube, gastrocoel roof plate, epidermal multiciliated cells, otic vesicles and kidneys.

The protein resides in the nucleus. It is found in the cytoplasm. Functionally, transcription factor that acts as a key regulator of ciliogenesis. Specifically regulates expression of genes required for cilium assembly and function. Recognizes and binds the X-box, a regulatory motif with DNA sequence 5'-GTNRCC(0-3N)RGYAAC-3' present on promoters. Required for neural tube closure and neural ciliogenesis. The polypeptide is DNA-binding protein RFX2 (rfx2) (Xenopus laevis (African clawed frog)).